The primary structure comprises 276 residues: NAD kinase (276 aa).

The Proton acceptor role is filled by Asp67. Residues 67 to 68 (DG), Arg72, 136 to 137 (ND), Lys147, Arg164, Asp166, 177 to 182 (TAYALS), Ala201, and Gln235 each bind NAD(+).

It belongs to the NAD kinase family. A divalent metal cation is required as a cofactor.

Its subcellular location is the cytoplasm. It catalyses the reaction NAD(+) + ATP = ADP + NADP(+) + H(+). Involved in the regulation of the intracellular balance of NAD and NADP, and is a key enzyme in the biosynthesis of NADP. Catalyzes specifically the phosphorylation on 2'-hydroxyl of the adenosine moiety of NAD to yield NADP. This chain is NAD kinase, found in Thermococcus sibiricus (strain DSM 12597 / MM 739).